Reading from the N-terminus, the 312-residue chain is Malate dehydrogenase (312 aa).

Residues 7–13 and aspartate 34 contribute to the NAD(+) site; that span reads GAAGGIG. Residues arginine 81 and arginine 87 each contribute to the substrate site. Residues asparagine 94 and 117-119 contribute to the NAD(+) site; that span reads ITN. Residues asparagine 119 and arginine 153 each coordinate substrate. Catalysis depends on histidine 177, which acts as the Proton acceptor. An NAD(+)-binding site is contributed by methionine 227.

Belongs to the LDH/MDH superfamily. MDH type 1 family. In terms of assembly, homodimer.

It catalyses the reaction (S)-malate + NAD(+) = oxaloacetate + NADH + H(+). Catalyzes the reversible oxidation of malate to oxaloacetate. This Escherichia fergusonii (strain ATCC 35469 / DSM 13698 / CCUG 18766 / IAM 14443 / JCM 21226 / LMG 7866 / NBRC 102419 / NCTC 12128 / CDC 0568-73) protein is Malate dehydrogenase.